Consider the following 187-residue polypeptide: UPF0301 protein VSAL_I0547 (187 aa).

The protein belongs to the UPF0301 (AlgH) family.

This Aliivibrio salmonicida (strain LFI1238) (Vibrio salmonicida (strain LFI1238)) protein is UPF0301 protein VSAL_I0547.